The following is a 402-amino-acid chain: Multidrug resistance protein MdtH (402 aa).

The Cytoplasmic portion of the chain corresponds to Met1–Lys12. The chain crosses the membrane as a helical span at residues Tyr13 to Ile33. Residues Ser34–Glu98 are Periplasmic-facing. The chain crosses the membrane as a helical span at residues Pro99 to Phe116. At Asp117 to Ser138 the chain is on the cytoplasmic side. A helical transmembrane segment spans residues Leu139–Leu159. Residues Gln160–Arg164 are Periplasmic-facing. A helical membrane pass occupies residues Leu165 to Leu185. Residues Pro186–Tyr213 lie on the Cytoplasmic side of the membrane. The helical transmembrane segment at Val214–Met234 threads the bilayer. Residues Val235–Ala243 lie on the Periplasmic side of the membrane. A helical transmembrane segment spans residues Ala244–Ala264. At Arg265 to Arg276 the chain is on the cytoplasmic side. The helical transmembrane segment at Leu277–Leu297 threads the bilayer. Residues Gln298–Gln299 are Periplasmic-facing. Residues Leu300–Thr320 form a helical membrane-spanning segment. Residues Leu321–Arg339 lie on the Cytoplasmic side of the membrane. Residues Leu340 to Gly360 traverse the membrane as a helical segment. Residues Lys361–Glu367 are Periplasmic-facing. Residues Leu368–Phe388 form a helical membrane-spanning segment. Over Ser389–Ala402 the chain is Cytoplasmic.

The protein belongs to the major facilitator superfamily. DHA1 family. MdtH (TC 2.A.1.2.21) subfamily.

The protein localises to the cell inner membrane. This Salmonella paratyphi B (strain ATCC BAA-1250 / SPB7) protein is Multidrug resistance protein MdtH.